A 763-amino-acid chain; its full sequence is Phosphoglycerol transferase I (763 aa).

The next 4 membrane-spanning stretches (helical) occupy residues 1–21 (MSELLSVALFLASVLIYAWKA), 26–46 (WWFAATLTVLGLFVILNITLY), 77–97 (ILPGIGIALALVAVFGALGWV), and 108–128 (VGYSLLALLLALGSVDASPAF).

It belongs to the OpgB family.

The protein localises to the cell inner membrane. The enzyme catalyses a phosphatidylglycerol + a membrane-derived-oligosaccharide D-glucose = a 1,2-diacyl-sn-glycerol + a membrane-derived-oligosaccharide 6-(glycerophospho)-D-glucose.. It functions in the pathway glycan metabolism; osmoregulated periplasmic glucan (OPG) biosynthesis. Functionally, transfers a phosphoglycerol residue from phosphatidylglycerol to the membrane-bound nascent glucan backbones. The protein is Phosphoglycerol transferase I of Salmonella schwarzengrund (strain CVM19633).